The sequence spans 262 residues: Inactive snake venom serine proteinase 13 (262 aa).

The N-terminal stretch at 1–18 (MGLIRVLANLLILQLSYA) is a signal peptide. A propeptide spanning residues 19–24 (QKSSEL) is cleaved from the precursor. The Peptidase S1 domain maps to 25–250 (VIGGDECNIN…HLDWIQSIIA (226 aa)). Disulfide bonds link Cys31/Cys162, Cys49/Cys65, Cys97/Cys257, Cys141/Cys211, Cys173/Cys190, and Cys201/Cys226. Asn78, Asn102, and Asn153 each carry an N-linked (GlcNAc...) asparagine glycan.

It belongs to the peptidase S1 family. Snake venom subfamily. Monomer. Expressed by the venom gland.

Its subcellular location is the secreted. This is Inactive snake venom serine proteinase 13 from Crotalus adamanteus (Eastern diamondback rattlesnake).